Here is a 181-residue protein sequence, read N- to C-terminus: Putative poly [ADP-ribose] polymerase-like 100L (181 aa).

The region spanning 1 to 181 (MDNLKEEETN…KIKYIIHITK (181 aa)) is the PARP catalytic domain.

The enzyme catalyses NAD(+) + (ADP-D-ribosyl)n-acceptor = nicotinamide + (ADP-D-ribosyl)n+1-acceptor + H(+).. This Invertebrate iridescent virus 6 (IIV-6) protein is Putative poly [ADP-ribose] polymerase-like 100L.